Here is a 495-residue protein sequence, read N- to C-terminus: Homeobox protein ceh-21 (495 aa).

Polar residues predominate over residues 1-14; that stretch reads MSQQFQASSGTGSA. Disordered stretches follow at residues 1–24 and 89–267; these read MSQQ…TEHE and TAES…PGGE. The segment covering 106–120 has biased composition (basic and acidic residues); sequence LEEKSDKSSDGDGTS. A compositionally biased stretch (acidic residues) spans 132–145; it reads NETEEDHEEKEDEA. Residues 149-162 are compositionally biased toward basic and acidic residues; that stretch reads SRRESTRLKRKLLE. 2 stretches are compositionally biased toward polar residues: residues 163–179 and 199–217; these read SQKT…ASSK and TPEQ…TVRA. Residues 218 to 233 are compositionally biased toward low complexity; it reads SSTCGSSVSSTSTVSS. The span at 242 to 254 shows a compositional bias: basic and acidic residues; it reads RATETPKLEELAP. The segment at residues 284–370 is a DNA-binding region (CUT); it reads NAQIGDDEEL…VRRALCFLPK (87 aa). The homeobox DNA-binding region spans 389–449; that stretch reads KTVKVIRLTF…MNSRRRLRID (61 aa). A disordered region spans residues 450-473; it reads QQISRSSRSTGNGADTEDELDEED. The segment covering 464–473 has biased composition (acidic residues); it reads DTEDELDEED.

It belongs to the CUT homeobox family.

It localises to the nucleus. Functionally, probable DNA-binding regulatory protein involved in cell-fate specification. In Caenorhabditis elegans, this protein is Homeobox protein ceh-21 (ceh-21).